Consider the following 100-residue polypeptide: Integration host factor subunit alpha (100 aa).

This sequence belongs to the bacterial histone-like protein family. As to quaternary structure, heterodimer of an alpha and a beta chain.

Functionally, this protein is one of the two subunits of integration host factor, a specific DNA-binding protein that functions in genetic recombination as well as in transcriptional and translational control. Involved in hydrogenase gene expression. This chain is Integration host factor subunit alpha (ihfA), found in Rhodobacter capsulatus (Rhodopseudomonas capsulata).